The chain runs to 349 residues: S-adenosylmethionine:tRNA ribosyltransferase-isomerase (349 aa).

It belongs to the QueA family. Monomer.

Its subcellular location is the cytoplasm. It carries out the reaction 7-aminomethyl-7-carbaguanosine(34) in tRNA + S-adenosyl-L-methionine = epoxyqueuosine(34) in tRNA + adenine + L-methionine + 2 H(+). The protein operates within tRNA modification; tRNA-queuosine biosynthesis. Transfers and isomerizes the ribose moiety from AdoMet to the 7-aminomethyl group of 7-deazaguanine (preQ1-tRNA) to give epoxyqueuosine (oQ-tRNA). The chain is S-adenosylmethionine:tRNA ribosyltransferase-isomerase from Pseudomonas putida (strain ATCC 700007 / DSM 6899 / JCM 31910 / BCRC 17059 / LMG 24140 / F1).